Consider the following 148-residue polypeptide: Globin, monomeric component M-IV (148 aa).

One can recognise a Globin domain in the interval 2-147; that stretch reads GLSAAQRQVV…ISGALISGLQ (146 aa). Position 91 (His91) interacts with heme b.

As to quaternary structure, monomer.

The sequence is that of Globin, monomeric component M-IV from Glycera dibranchiata (Bloodworm).